A 177-amino-acid polypeptide reads, in one-letter code: MKLPKEGDFITIQSYKHDGRLHRTWRDTMVLKTTENAVIGVNDHTLVTEADGRRWVTREPAIVYFHKKYWFNIIAMIRDNGISYYCNLASPYVLDQEALKYIDYDLDVKVFADGEKKLLDVDEYEIHKKEMHYSPDIDYILKEHVKILVDWINNGKGPFSQSYVNIWYKRYLELRNR.

Residue arginine 23 is the Proton donor of the active site. Mg(2+) is bound by residues asparagine 87, aspartate 103, aspartate 105, aspartate 107, aspartate 120, and glutamate 123.

The protein belongs to the Ntdp family. It depends on Mg(2+) as a cofactor.

It catalyses the reaction a ribonucleoside 5'-triphosphate + H2O = a ribonucleoside 5'-diphosphate + phosphate + H(+). The enzyme catalyses a ribonucleoside 5'-diphosphate + H2O = a ribonucleoside 5'-phosphate + phosphate + H(+). Functionally, has nucleoside phosphatase activity towards nucleoside triphosphates and nucleoside diphosphates. This chain is Nucleoside triphosphate/diphosphate phosphatase, found in Streptococcus thermophilus (strain CNRZ 1066).